We begin with the raw amino-acid sequence, 449 residues long: GTPase Der (449 aa).

EngA-type G domains lie at 3-167 (AVIA…PTSE) and 178-351 (PRIA…IDSR). GTP is bound by residues 9-16 (GRPNVGKS), 56-60 (DTGGF), 119-122 (NKMD), 184-191 (GRPNVGKS), 231-235 (DTAGM), and 296-299 (NKWD). One can recognise a KH-like domain in the interval 352-436 (RHFSTAELNR…PLRLVFRQGE (85 aa)).

It belongs to the TRAFAC class TrmE-Era-EngA-EngB-Septin-like GTPase superfamily. EngA (Der) GTPase family. As to quaternary structure, associates with the 50S ribosomal subunit.

GTPase that plays an essential role in the late steps of ribosome biogenesis. The protein is GTPase Der of Acidithiobacillus ferrooxidans (strain ATCC 23270 / DSM 14882 / CIP 104768 / NCIMB 8455) (Ferrobacillus ferrooxidans (strain ATCC 23270)).